A 223-amino-acid polypeptide reads, in one-letter code: Cytidylate kinase (223 aa).

An ATP-binding site is contributed by 10 to 18 (GPAGTGKSS).

The protein belongs to the cytidylate kinase family. Type 1 subfamily.

The protein localises to the cytoplasm. It carries out the reaction CMP + ATP = CDP + ADP. It catalyses the reaction dCMP + ATP = dCDP + ADP. The polypeptide is Cytidylate kinase (Mycobacterium leprae (strain Br4923)).